A 224-amino-acid polypeptide reads, in one-letter code: ATP synthase subunit a (224 aa).

The next 6 membrane-spanning stretches (helical) occupy residues 17–37 (FIYM…VKMA), 78–98 (LVAT…VPGF), 104–124 (FLEF…YEGI), 136–156 (FLGP…VSHF), 176–196 (FLMV…YALL), and 201–221 (FLQA…AIAV).

Belongs to the ATPase A chain family. As to quaternary structure, F-type ATPases have 2 components, CF(1) - the catalytic core - and CF(0) - the membrane proton channel. CF(1) has five subunits: alpha(3), beta(3), gamma(1), delta(1), epsilon(1). CF(0) has three main subunits: a(1), b(2) and c(9-12). The alpha and beta chains form an alternating ring which encloses part of the gamma chain. CF(1) is attached to CF(0) by a central stalk formed by the gamma and epsilon chains, while a peripheral stalk is formed by the delta and b chains.

The protein localises to the cell inner membrane. Key component of the proton channel; it plays a direct role in the translocation of protons across the membrane. This chain is ATP synthase subunit a, found in Sulfurimonas denitrificans (strain ATCC 33889 / DSM 1251) (Thiomicrospira denitrificans (strain ATCC 33889 / DSM 1251)).